Here is a 288-residue protein sequence, read N- to C-terminus: ATP synthase gamma chain (288 aa).

The protein belongs to the ATPase gamma chain family. As to quaternary structure, F-type ATPases have 2 components, CF(1) - the catalytic core - and CF(0) - the membrane proton channel. CF(1) has five subunits: alpha(3), beta(3), gamma(1), delta(1), epsilon(1). CF(0) has three main subunits: a, b and c.

It localises to the cell inner membrane. Its function is as follows. Produces ATP from ADP in the presence of a proton gradient across the membrane. The gamma chain is believed to be important in regulating ATPase activity and the flow of protons through the CF(0) complex. The chain is ATP synthase gamma chain from Rickettsia felis (strain ATCC VR-1525 / URRWXCal2) (Rickettsia azadi).